The chain runs to 484 residues: Regulatory protein ViaA (484 aa).

It belongs to the ViaA family. Homodimer. Interacts with RavA.

The protein resides in the cytoplasm. In terms of biological role, component of the RavA-ViaA chaperone complex, which may act on the membrane to optimize the function of some of the respiratory chains. ViaA stimulates the ATPase activity of RavA. The protein is Regulatory protein ViaA of Edwardsiella ictaluri (strain 93-146).